The following is a 468-amino-acid chain: Serine--tRNA ligase (468 aa).

272 to 274 (TAE) lines the L-serine pocket. 303–305 (RAE) lines the ATP pocket. Glutamate 326 lines the L-serine pocket. Residue 390-393 (EISS) coordinates ATP. An L-serine-binding site is contributed by serine 426.

Belongs to the class-II aminoacyl-tRNA synthetase family. Type-1 seryl-tRNA synthetase subfamily. Homodimer. The tRNA molecule binds across the dimer.

It is found in the cytoplasm. The catalysed reaction is tRNA(Ser) + L-serine + ATP = L-seryl-tRNA(Ser) + AMP + diphosphate + H(+). The enzyme catalyses tRNA(Sec) + L-serine + ATP = L-seryl-tRNA(Sec) + AMP + diphosphate + H(+). It functions in the pathway aminoacyl-tRNA biosynthesis; selenocysteinyl-tRNA(Sec) biosynthesis; L-seryl-tRNA(Sec) from L-serine and tRNA(Sec): step 1/1. Functionally, catalyzes the attachment of serine to tRNA(Ser). Is also able to aminoacylate tRNA(Sec) with serine, to form the misacylated tRNA L-seryl-tRNA(Sec), which will be further converted into selenocysteinyl-tRNA(Sec). The chain is Serine--tRNA ligase from Xanthobacter autotrophicus (strain ATCC BAA-1158 / Py2).